Here is a 264-residue protein sequence, read N- to C-terminus: Thiazole synthase (264 aa).

The active-site Schiff-base intermediate with DXP is K106. Residues G167, 193–194 (AG), and 215–216 (NS) each bind 1-deoxy-D-xylulose 5-phosphate.

It belongs to the ThiG family. As to quaternary structure, homotetramer. Forms heterodimers with either ThiH or ThiS.

The protein localises to the cytoplasm. It catalyses the reaction [ThiS sulfur-carrier protein]-C-terminal-Gly-aminoethanethioate + 2-iminoacetate + 1-deoxy-D-xylulose 5-phosphate = [ThiS sulfur-carrier protein]-C-terminal Gly-Gly + 2-[(2R,5Z)-2-carboxy-4-methylthiazol-5(2H)-ylidene]ethyl phosphate + 2 H2O + H(+). Its pathway is cofactor biosynthesis; thiamine diphosphate biosynthesis. Functionally, catalyzes the rearrangement of 1-deoxy-D-xylulose 5-phosphate (DXP) to produce the thiazole phosphate moiety of thiamine. Sulfur is provided by the thiocarboxylate moiety of the carrier protein ThiS. In vitro, sulfur can be provided by H(2)S. This is Thiazole synthase from Stutzerimonas stutzeri (strain A1501) (Pseudomonas stutzeri).